A 295-amino-acid chain; its full sequence is Virginiamycin B lyase (295 aa).

His228 is a substrate binding site. Mg(2+) is bound at residue Glu268. His270 (proton acceptor) is an active-site residue. Residue Glu285 coordinates Mg(2+).

It belongs to the Vgb family. Monomer. Requires Mg(2+) as cofactor.

Inactivates the type B streptogramin antibiotics by linearizing the lactone ring at the ester linkage, generating a free phenylglycine carboxylate and converting the threonyl moiety into 2-amino-butenoic acid. The polypeptide is Virginiamycin B lyase (Clostridium beijerinckii (strain ATCC 51743 / NCIMB 8052) (Clostridium acetobutylicum)).